Here is a 404-residue protein sequence, read N- to C-terminus: SL1278 acyltransferase Chp1 (404 aa).

Topologically, residues 1 to 42 (MKCPGVSDCVATVRHDNVFAIAAGLRWSAAVPPLHKGDAVTK) are periplasmic. The chain crosses the membrane as a helical span at residues 43 to 63 (LLVGAIAGGMLACAAILGDGI). The Cytoplasmic segment spans residues 64 to 404 (ASADTALIVP…RGLLPKGKKH (341 aa)). In terms of domain architecture, PE-PPE spans 104 to 325 (PTATRHVVSY…LRPIIDRAYQ (222 aa)).

Belongs to the mycobacterial PPE family.

The protein localises to the cell inner membrane. The enzyme catalyses 3 3'-(hydroxy)phthioceranyl-2'-palmitoyl(stearoyl)-2-O-sulfo-alpha,alpha-trehalose = 3,6,6'-tris-(hydroxy)phthioceranyl-2-palmitoyl(stearoyl)-2'-sulfo-alpha-alpha-trehalose + 2 2'-palmitoyl/stearoyl-2-O-sulfo-alpha,alpha-trehalose.. Activity is potentiated by the SL-1 transporter MmpL8. Inhibited by the lipase inhibitor tetrahydrolipstatin (THL). In terms of biological role, involved in the final steps of the cell wall sulfolipid-1 (SL-1) biosynthesis. Catalyzes two successive acylations of the precursor 2-palmitoyl-3-(C43)-phthioceranyl-alpha, alpha'-D-trehalose-2'-sulfate (SL1278) to yield the tetraacylated sulfolipid SL-1. This Mycobacterium tuberculosis (strain ATCC 25618 / H37Rv) protein is SL1278 acyltransferase Chp1.